The primary structure comprises 625 residues: Chaperone protein HtpG (625 aa).

The interval 1 to 339 (MNKQTLSFQA…SSDLPLNVSR (339 aa)) is a; substrate-binding. The tract at residues 340–557 (ELLQESRDVK…DGDISGHLAR (218 aa)) is b. Residues 558 to 625 (LLKQAGQSAP…YVQRVNRLLV (68 aa)) are c.

It belongs to the heat shock protein 90 family. Homodimer.

It localises to the cytoplasm. Molecular chaperone. Has ATPase activity. This Methylibium petroleiphilum (strain ATCC BAA-1232 / LMG 22953 / PM1) protein is Chaperone protein HtpG.